A 1369-amino-acid chain; its full sequence is DNA-directed RNA polymerase subunit beta' (1369 aa).

The tract at residues 1 to 26 is disordered; that stretch reads MTSSSPKTRKSSTKSKAKRGSKSKKA. A compositionally biased stretch (basic residues) spans 7–24; it reads KTRKSSTKSKAKRGSKSK. 4 residues coordinate Zn(2+): cysteine 253, cysteine 320, cysteine 327, and cysteine 330. The interval 1294–1369 is disordered; the sequence is TVDMPSSPVA…LQEEGLLSDE (76 aa). Over residues 1342–1351 the composition is skewed to acidic residues; that stretch reads DDELSAEDQM. Positions 1357 to 1369 are enriched in low complexity; it reads LEGLQEEGLLSDE.

The protein belongs to the RNA polymerase beta' chain family. RpoC2 subfamily. As to quaternary structure, in cyanobacteria the RNAP catalytic core is composed of 2 alpha, 1 beta, 1 beta', 1 gamma and 1 omega subunit. When a sigma factor is associated with the core the holoenzyme is formed, which can initiate transcription. Zn(2+) serves as cofactor.

It catalyses the reaction RNA(n) + a ribonucleoside 5'-triphosphate = RNA(n+1) + diphosphate. In terms of biological role, DNA-dependent RNA polymerase catalyzes the transcription of DNA into RNA using the four ribonucleoside triphosphates as substrates. The protein is DNA-directed RNA polymerase subunit beta' of Prochlorococcus marinus (strain NATL2A).